The chain runs to 80 residues: Metallothionein-like protein type 2, MT2-28 (80 aa).

The protein belongs to the metallothionein superfamily. Type 15 family.

Its function is as follows. Metallothioneins have a high content of cysteine residues that bind various heavy metals. The protein is Metallothionein-like protein type 2, MT2-28 of Brassica juncea (Indian mustard).